A 676-amino-acid polypeptide reads, in one-letter code: Potassium-transporting ATPase ATP-binding subunit (676 aa).

4 helical membrane-spanning segments follow: residues 24–44 (NPVM…CFYP), 45–65 (MGIP…TLLF), 212–232 (IFLI…VPFT), and 246–266 (SLVI…GALI). Asp302 acts as the 4-aspartylphosphate intermediate in catalysis. ATP-binding positions include Asp339, Glu343, 372–379 (FSAKTRMS), and Lys390. Positions 513 and 517 each coordinate Mg(2+). A run of 3 helical transmembrane segments spans residues 573 to 593 (FSIA…FYSI), 611 to 631 (AILS…PLAL), and 656 to 676 (GIIA…LIIL).

Belongs to the cation transport ATPase (P-type) (TC 3.A.3) family. Type IA subfamily. In terms of assembly, the system is composed of three essential subunits: KdpA, KdpB and KdpC.

It is found in the cell membrane. It carries out the reaction K(+)(out) + ATP + H2O = K(+)(in) + ADP + phosphate + H(+). Part of the high-affinity ATP-driven potassium transport (or Kdp) system, which catalyzes the hydrolysis of ATP coupled with the electrogenic transport of potassium into the cytoplasm. This subunit is responsible for energy coupling to the transport system and for the release of the potassium ions to the cytoplasm. This chain is Potassium-transporting ATPase ATP-binding subunit, found in Enterococcus faecalis (strain ATCC 700802 / V583).